A 309-amino-acid polypeptide reads, in one-letter code: Virulence regulon transcriptional activator VirB (309 aa).

The H-T-H motif DNA-binding region spans 152–171 (KDIAKKENLSRAKVTRAFQA).

This sequence belongs to the ParB family.

Its function is as follows. Transcription activator for the invasion antigens IpaB, IpaC and IpaD. VirB is itself regulated by VirF. The protein is Virulence regulon transcriptional activator VirB (virB) of Shigella flexneri.